The following is a 127-amino-acid chain: Ribosome-binding factor A (127 aa).

Belongs to the RbfA family. In terms of assembly, monomer. Binds 30S ribosomal subunits, but not 50S ribosomal subunits or 70S ribosomes.

The protein resides in the cytoplasm. Its function is as follows. One of several proteins that assist in the late maturation steps of the functional core of the 30S ribosomal subunit. Associates with free 30S ribosomal subunits (but not with 30S subunits that are part of 70S ribosomes or polysomes). Required for efficient processing of 16S rRNA. May interact with the 5'-terminal helix region of 16S rRNA. In Chloroflexus aggregans (strain MD-66 / DSM 9485), this protein is Ribosome-binding factor A.